Reading from the N-terminus, the 54-residue chain is Ovomucoid (54 aa).

A Kazal-like domain is found at 4–54 (VDCSDYPKPACTVEYMPLCGSDNKTYGNKCNFCNAVVDSNGTLTLSHFGKC). 3 disulfide bridges follow: Cys-6–Cys-36, Cys-14–Cys-33, and Cys-22–Cys-54. Asn-43 is a glycosylation site (N-linked (GlcNAc...) asparagine).

Its subcellular location is the secreted. This chain is Ovomucoid, found in Anser canagicus (Emperor goose).